The sequence spans 361 residues: Spermidine/putrescine import ATP-binding protein PotA (361 aa).

Residues 4 to 234 (LELRDVTRRF…PANRFIADFI (231 aa)) form the ABC transporter domain. Residue 36-43 (GPSGCGKT) coordinates ATP.

This sequence belongs to the ABC transporter superfamily. Spermidine/putrescine importer (TC 3.A.1.11.1) family. As to quaternary structure, the complex is composed of two ATP-binding proteins (PotA), two transmembrane proteins (PotB and PotC) and a solute-binding protein (PotD).

The protein resides in the cell inner membrane. The catalysed reaction is ATP + H2O + polyamine-[polyamine-binding protein]Side 1 = ADP + phosphate + polyamineSide 2 + [polyamine-binding protein]Side 1.. Part of the ABC transporter complex PotABCD involved in spermidine/putrescine import. Responsible for energy coupling to the transport system. In Nitrosomonas europaea (strain ATCC 19718 / CIP 103999 / KCTC 2705 / NBRC 14298), this protein is Spermidine/putrescine import ATP-binding protein PotA.